A 113-amino-acid polypeptide reads, in one-letter code: Large ribosomal subunit protein uL22 (113 aa).

This sequence belongs to the universal ribosomal protein uL22 family. Part of the 50S ribosomal subunit.

This protein binds specifically to 23S rRNA; its binding is stimulated by other ribosomal proteins, e.g. L4, L17, and L20. It is important during the early stages of 50S assembly. It makes multiple contacts with different domains of the 23S rRNA in the assembled 50S subunit and ribosome. Its function is as follows. The globular domain of the protein is located near the polypeptide exit tunnel on the outside of the subunit, while an extended beta-hairpin is found that lines the wall of the exit tunnel in the center of the 70S ribosome. The polypeptide is Large ribosomal subunit protein uL22 (Xanthomonas oryzae pv. oryzae (strain MAFF 311018)).